The sequence spans 208 residues: Protein-L-isoaspartate O-methyltransferase (208 aa).

Ser-59 is a catalytic residue.

Belongs to the methyltransferase superfamily. L-isoaspartyl/D-aspartyl protein methyltransferase family.

It localises to the cytoplasm. It carries out the reaction [protein]-L-isoaspartate + S-adenosyl-L-methionine = [protein]-L-isoaspartate alpha-methyl ester + S-adenosyl-L-homocysteine. Its function is as follows. Catalyzes the methyl esterification of L-isoaspartyl residues in peptides and proteins that result from spontaneous decomposition of normal L-aspartyl and L-asparaginyl residues. It plays a role in the repair and/or degradation of damaged proteins. This chain is Protein-L-isoaspartate O-methyltransferase, found in Escherichia coli (strain K12 / MC4100 / BW2952).